The following is a 349-amino-acid chain: Glycosyltransferase 8 domain-containing protein 2 (349 aa).

Residues 1–6 (MALLRK) are Cytoplasmic-facing. Residues 7–24 (INQVLLFLLIVTLCVILY) form a helical; Signal-anchor for type II membrane protein membrane-spanning segment. The Lumenal portion of the chain corresponds to 25 to 349 (KKVHKGTVSK…AGIFKLNHHS (325 aa)). The N-linked (GlcNAc...) asparagine glycan is linked to asparagine 234.

It belongs to the glycosyltransferase 8 family.

It localises to the membrane. In Macaca fascicularis (Crab-eating macaque), this protein is Glycosyltransferase 8 domain-containing protein 2 (GLT8D2).